The chain runs to 421 residues: Probable sugar-binding periplasmic protein (421 aa).

The N-terminal stretch at 1–27 (MHKLLKLAAMGTAACALLAGMAPVANA) is a signal peptide.

Belongs to the bacterial solute-binding protein 1 family.

Its subcellular location is the periplasm. Its function is as follows. Part of a binding-protein-dependent transport system for a sugar. This Brucella melitensis biotype 1 (strain ATCC 23456 / CCUG 17765 / NCTC 10094 / 16M) protein is Probable sugar-binding periplasmic protein.